The following is a 101-amino-acid chain: Chaperone modulatory protein CbpM (101 aa).

It belongs to the CbpM family.

In terms of biological role, interacts with CbpA and inhibits both the DnaJ-like co-chaperone activity and the DNA binding activity of CbpA. Together with CbpA, modulates the activity of the DnaK chaperone system. Does not inhibit the co-chaperone activity of DnaJ. In Salmonella paratyphi A (strain ATCC 9150 / SARB42), this protein is Chaperone modulatory protein CbpM.